Reading from the N-terminus, the 127-residue chain is Large ribosomal subunit protein bL17 (127 aa).

The protein belongs to the bacterial ribosomal protein bL17 family. In terms of assembly, part of the 50S ribosomal subunit. Contacts protein L32.

This is Large ribosomal subunit protein bL17 from Levilactobacillus brevis (strain ATCC 367 / BCRC 12310 / CIP 105137 / JCM 1170 / LMG 11437 / NCIMB 947 / NCTC 947) (Lactobacillus brevis).